The sequence spans 225 residues: ATP-dependent dethiobiotin synthetase BioD 1 (225 aa).

13-18 (EVGKTV) serves as a coordination point for ATP. Thr17 serves as a coordination point for Mg(2+). Lys38 is a catalytic residue. Position 42 (Ser42) interacts with substrate. Residues Asp55, 116-119 (EGAG), 176-177 (ND), 205-207 (PWL), and Glu212 contribute to the ATP site. Mg(2+) is bound by residues Asp55 and Glu116.

This sequence belongs to the dethiobiotin synthetase family. As to quaternary structure, homodimer. The cofactor is Mg(2+).

The protein resides in the cytoplasm. It catalyses the reaction (7R,8S)-7,8-diammoniononanoate + CO2 + ATP = (4R,5S)-dethiobiotin + ADP + phosphate + 3 H(+). It functions in the pathway cofactor biosynthesis; biotin biosynthesis; biotin from 7,8-diaminononanoate: step 1/2. Catalyzes a mechanistically unusual reaction, the ATP-dependent insertion of CO2 between the N7 and N8 nitrogen atoms of 7,8-diaminopelargonic acid (DAPA, also called 7,8-diammoniononanoate) to form a ureido ring. This chain is ATP-dependent dethiobiotin synthetase BioD 1, found in Escherichia coli O157:H7.